The following is a 557-amino-acid chain: Dihydroxy-acid dehydratase (557 aa).

Aspartate 78 contributes to the Mg(2+) binding site. Cysteine 119 lines the [2Fe-2S] cluster pocket. Residues aspartate 120 and lysine 121 each coordinate Mg(2+). Lysine 121 carries the N6-carboxylysine modification. Residue cysteine 191 coordinates [2Fe-2S] cluster. Residue glutamate 442 coordinates Mg(2+). The Proton acceptor role is filled by serine 468.

This sequence belongs to the IlvD/Edd family. As to quaternary structure, homodimer. The cofactor is [2Fe-2S] cluster. Requires Mg(2+) as cofactor.

It carries out the reaction (2R)-2,3-dihydroxy-3-methylbutanoate = 3-methyl-2-oxobutanoate + H2O. The enzyme catalyses (2R,3R)-2,3-dihydroxy-3-methylpentanoate = (S)-3-methyl-2-oxopentanoate + H2O. The protein operates within amino-acid biosynthesis; L-isoleucine biosynthesis; L-isoleucine from 2-oxobutanoate: step 3/4. It functions in the pathway amino-acid biosynthesis; L-valine biosynthesis; L-valine from pyruvate: step 3/4. Functions in the biosynthesis of branched-chain amino acids. Catalyzes the dehydration of (2R,3R)-2,3-dihydroxy-3-methylpentanoate (2,3-dihydroxy-3-methylvalerate) into 2-oxo-3-methylpentanoate (2-oxo-3-methylvalerate) and of (2R)-2,3-dihydroxy-3-methylbutanoate (2,3-dihydroxyisovalerate) into 2-oxo-3-methylbutanoate (2-oxoisovalerate), the penultimate precursor to L-isoleucine and L-valine, respectively. This Lachnoclostridium phytofermentans (strain ATCC 700394 / DSM 18823 / ISDg) (Clostridium phytofermentans) protein is Dihydroxy-acid dehydratase.